The primary structure comprises 303 residues: D-alanine--D-alanine ligase B (303 aa).

The ATP-grasp domain maps to 103 to 298 (KLLWKGAGLP…YEDLCLKVLD (196 aa)). Residue 129-184 (ERQLGLPIFVKPSTEGSSIGVTKVKQPGELRAAFEEARKYDKVVIAEQFIGGGEYT) coordinates ATP. 3 residues coordinate Mg(2+): D252, E265, and N267.

This sequence belongs to the D-alanine--D-alanine ligase family. Mg(2+) serves as cofactor. Mn(2+) is required as a cofactor.

The protein resides in the cytoplasm. The enzyme catalyses 2 D-alanine + ATP = D-alanyl-D-alanine + ADP + phosphate + H(+). It participates in cell wall biogenesis; peptidoglycan biosynthesis. In terms of biological role, cell wall formation. In Chromobacterium violaceum (strain ATCC 12472 / DSM 30191 / JCM 1249 / CCUG 213 / NBRC 12614 / NCIMB 9131 / NCTC 9757 / MK), this protein is D-alanine--D-alanine ligase B.